The chain runs to 405 residues: MAVGLGPLPALHPVPGFELGISSAGIKRPGRKDVVVMRCAEGSSVAGVFTLNAFCAAPVILAKQRVQGTVRYLLTNTGNANAGTGEPGLVAARRTCEALAQLTGVDASAVLPYSTGVIGEPLPVEKIEGALQAALDDLSVDNWAAAATGIMTTDTLPKGASRQFTHDGVTITVTGISKGAGMIRPNMATMLGYIATDAKVSQSVLQDLIRDGANKSFNRLTIDGDTSTNDCCMLIATGQADLPEITEAKGLLFEALKKAVFDVCMEVAQAIVRDGEGATKFVTVEVNGGGNHQECLDVGYAVAHSPLIKTALFASDPNWGRILAAVGRAGVPDLDVSKIDVFLGGVCIASQGCRATTYTEEQGSAVMAEAEITIRIELGRGDCSETIWTTDLSHEYVKINAEYRT.

Substrate contacts are provided by threonine 152, lysine 178, threonine 189, glutamate 276, asparagine 400, and threonine 405. Residue threonine 189 is the Nucleophile of the active site.

Belongs to the ArgJ family. As to quaternary structure, heterotetramer of two alpha and two beta chains.

The protein localises to the cytoplasm. The catalysed reaction is N(2)-acetyl-L-ornithine + L-glutamate = N-acetyl-L-glutamate + L-ornithine. The enzyme catalyses L-glutamate + acetyl-CoA = N-acetyl-L-glutamate + CoA + H(+). The protein operates within amino-acid biosynthesis; L-arginine biosynthesis; L-ornithine and N-acetyl-L-glutamate from L-glutamate and N(2)-acetyl-L-ornithine (cyclic): step 1/1. It participates in amino-acid biosynthesis; L-arginine biosynthesis; N(2)-acetyl-L-ornithine from L-glutamate: step 1/4. Its function is as follows. Catalyzes two activities which are involved in the cyclic version of arginine biosynthesis: the synthesis of N-acetylglutamate from glutamate and acetyl-CoA as the acetyl donor, and of ornithine by transacetylation between N(2)-acetylornithine and glutamate. The chain is Arginine biosynthesis bifunctional protein ArgJ from Pseudomonas syringae pv. tomato (strain ATCC BAA-871 / DC3000).